The sequence spans 137 residues: MRTLWILAVLLVSVDGSMFNLWKMIMVMTGKEATKNYGMYGCNCGPMKRGKPKDATDQCCADHDCCYKKLTDCDPKKESYSYKFEKGEILCGETNPCLNQACECDKAVATCFRDNLDTYNKKQQFNTGIFCSKAKAC.

The N-terminal stretch at 1–16 (MRTLWILAVLLVSVDG) is a signal peptide. 7 cysteine pairs are disulfide-bonded: cysteine 42–cysteine 131, cysteine 44–cysteine 60, cysteine 59–cysteine 111, cysteine 65–cysteine 137, cysteine 66–cysteine 104, cysteine 73–cysteine 97, and cysteine 91–cysteine 102. Residues 121–133 (KKQQFNTGIFCSK) are important for membrane-damaging activities in eukaryotes and bacteria; heparin-binding.

In terms of assembly, monomer. In terms of tissue distribution, expressed by the venom gland.

The protein resides in the secreted. With respect to regulation, heparin reduces its edema-inducing activity. Functionally, snake venom phospholipase A2 homolog that lacks enzymatic activity. Shows myotoxin activities and displays edema-inducing activities. A model of myotoxic mechanism has been proposed: an apo Lys49-PLA2 is activated by the entrance of a hydrophobic molecule (e.g. fatty acid) at the hydrophobic channel of the protein leading to a reorientation of a monomer. This reorientation causes a transition between 'inactive' to 'active' states, causing alignment of C-terminal and membrane-docking sites (MDoS) side-by-side and putting the membrane-disruption sites (MDiS) in the same plane, exposed to solvent and in a symmetric position for both monomers. The MDoS region stabilizes the toxin on membrane by the interaction of charged residues with phospholipid head groups. Subsequently, the MDiS region destabilizes the membrane with penetration of hydrophobic residues. This insertion causes a disorganization of the membrane, allowing an uncontrolled influx of ions (i.e. calcium and sodium), and eventually triggering irreversible intracellular alterations and cell death. The chain is Basic phospholipase A2 homolog W6D49 from Calloselasma rhodostoma (Malayan pit viper).